The chain runs to 419 residues: Napsin-A (419 aa).

Positions 1–16 (MSPLLLLLLCLLLGNL) are cleaved as a signal peptide. One can recognise a Peptidase A1 domain in the interval 73–394 (YFGTIGLGTP…KNVGPRVGLA (322 aa)). An N-linked (GlcNAc...) asparagine glycan is attached at asparagine 85. Aspartate 91 is a catalytic residue. Cysteine 104 and cysteine 111 form a disulfide bridge. Residues asparagine 128 and asparagine 149 are each glycosylated (N-linked (GlcNAc...) asparagine). The cysteines at positions 269 and 273 are disulfide-linked. The active site involves aspartate 278. The cysteines at positions 312 and 349 are disulfide-linked. A glycan (N-linked (GlcNAc...) asparagine) is linked at asparagine 331. A disordered region spans residues 391 to 419 (VGLARAQSRSTDRAERRTTQAQFFKRRPG).

Belongs to the peptidase A1 family. Expressed at the highest levels in the kidney, at a moderate level in the lung, and at low levels in the spleen and adipose tissue.

It localises to the secreted. Its function is as follows. May be involved in processing of pneumocyte surfactant precursors. This chain is Napsin-A (Napsa), found in Mus musculus (Mouse).